The primary structure comprises 655 residues: A-type voltage-gated potassium channel KCND3 (655 aa).

Residues 1-182 lie on the Cytoplasmic side of the membrane; sequence MAAGVAAWLP…FENPHTSTLA (182 aa). Residues 6 to 21 form an interaction with KCNIP1 and KCNIP2 region; the sequence is AAWLPFARAAAIGWMP. Residues 70–78 form an interaction with KCNIP1 region; that stretch reads EKEFFFNED. The Zn(2+) site is built by H104, C110, C131, and C132. A Phosphoserine modification is found at S153. The helical transmembrane segment at 183 to 204 threads the bilayer; sequence LVFYYVTGFFIAVSVITNVVET. The Extracellular portion of the chain corresponds to 205-223; sequence VPCGTVPGSKELPCGERYS. The chain crosses the membrane as a helical span at residues 224 to 246; that stretch reads VAFFCLDTACVMIFTVEYLLRLF. The Cytoplasmic segment spans residues 247 to 253; it reads AAPSRYR. A helical transmembrane segment spans residues 254–277; sequence FIRSVMSIIDVVAIMPYYIGLVMT. Residues 278–283 lie on the Extracellular side of the membrane; sequence NNEDVS. The chain crosses the membrane as a helical; Voltage-sensor span at residues 284-306; that stretch reads GAFVTLRVFRVFRIFKFSRHSQG. Residues 307–318 are Cytoplasmic-facing; that stretch reads LRILGYTLKSCA. Residues 319–343 traverse the membrane as a helical segment; that stretch reads SELGFLLFSLTMAIIIFATVMFYAE. Residues 344–352 are Extracellular-facing; the sequence is KGSSASKFT. Residues 353 to 366 constitute an intramembrane region (helical); it reads SIPASFWYTIVTMT. Residues T367, L368, G369, and Y370 each coordinate K(+). A Selectivity filter motif is present at residues 367 to 372; it reads TLGYGD. Residues 367 to 374 lie within the membrane without spanning it; sequence TLGYGDMV. Residues 378 to 400 form a helical membrane-spanning segment; the sequence is IAGKIFGSICSLSGVLVIALPVP. Residues 401–655 are Cytoplasmic-facing; it reads VIVSNFSRIY…ASNVVKVSAL (255 aa). T459 is subject to Phosphothreonine. Residues 470 to 487 are interaction with KCNIP1 and KCNIP2; that stretch reads SLIESQHHHLLHCLEKTT. The tract at residues 472–487 is mediates dendritic targeting; it reads IESQHHHLLHCLEKTT. Over residues 525-548 the composition is skewed to polar residues; the sequence is MQNYPSTRSPSLSSHPGLTTTCCS. The interval 525–565 is disordered; that stretch reads MQNYPSTRSPSLSSHPGLTTTCCSRRSKKTTHLPNSNLPAT. A Phosphoserine; by CaMK2D modification is found at S569. At S585 the chain carries Phosphoserine. The segment at 615-655 is disordered; it reads ISIPTPPALTPEGESRPPPASPGPNTNIPSIASNVVKVSAL. Over residues 637 to 647 the composition is skewed to polar residues; it reads GPNTNIPSIAS.

It belongs to the potassium channel family. D (Shal) (TC 1.A.1.2) subfamily. Kv4.3/KCND3 sub-subfamily. As to quaternary structure, homotetramer. Heterotetramer with KCND2. Associates with the regulatory subunits KCNIP3 and KCNIP4. Interacts with KCNE1, KCNE2, SCN1B and KCNAB1 and DLG1. Component of heteromultimeric potassium channels. Identified in potassium channel complexes containing KCND1, KCND2, KCND3, KCNIP1, KCNIP2, KCNIP3, KCNIP4, DPP6 and DPP10. Interacts with KCNIP1; each KCNIP1 monomer interacts with two adjacent KCND3 subunits, through both the N-terminal inactivation ball of a KCND3 subunit and a C-terminal helix from the adjacent KCND3 subunit, clamping them together; this interaction stabilizes the tetrameric form and modulates the channel gating kinetics namely channel activation and inactivation kinetics and rate of recovery from inactivation. Interacts with DPP6; this interaction modulates the channel gating kinetics namely channel activation and inactivation kinetics and rate of recovery from inactivation. Interacts with KCNIP2; each KCNIP2 monomer interacts with two adjacent KCND3 subunits, through both the N-terminal inactivation ball of a KCND3 subunit and a C-terminal helix from the adjacent KCND3 subunit, clamping them together; this interaction modulates the channel gating kinetics. In terms of processing, regulated through phosphorylation at Ser-569 by CaMK2D. As to expression, highly expressed in heart and brain, in particular in cortex, cerebellum, amygdala and caudate nucleus. Detected at lower levels in liver, skeletal muscle, kidney and pancreas.

Its subcellular location is the cell membrane. The protein localises to the sarcolemma. It is found in the cell projection. It localises to the dendrite. The enzyme catalyses K(+)(in) = K(+)(out). Pore-forming (alpha) subunit of voltage-gated A-type potassium channels that mediates transmembrane potassium transport in excitable membranes, in brain and heart. In cardiomyocytes, may generate the transient outward potassium current I(To). In neurons, may conduct the transient subthreshold somatodendritic A-type potassium current (ISA). Kinetics properties are characterized by fast activation at subthreshold membrane potentials, rapid inactivation, and quick recovery from inactivation. Channel properties are modulated by interactions with regulatory subunits. Interaction with the regulatory subunits KCNIP1 or KCNIP2 modulates the channel gating kinetics namely channel activation and inactivation kinetics and rate of recovery from inactivation. Likewise, interaction with DPP6 modulates the channel gating kinetics namely channel activation and inactivation kinetics. This Homo sapiens (Human) protein is A-type voltage-gated potassium channel KCND3 (KCND3).